The chain runs to 4625 residues: Dynein-1-alpha heavy chain, flagellar inner arm I1 complex (4625 aa).

A stem region spans residues 1–1919 (MDRRLEWVKE…LIRQCTGLFK (1919 aa)). Positions 70–84 (EQAPEAEDGEGEEHD) are enriched in acidic residues. A disordered region spans residues 70-163 (EQAPEAEDGE…DEPPAPPAPK (94 aa)). The span at 111–140 (EDAPAAAAEANGANPEDEAAAPADGAADGA) shows a compositional bias: low complexity. Residues 144-155 (GGEEGDGAEGDE) are compositionally biased toward acidic residues. 960 to 967 (AGTNSGKS) contributes to the ATP binding site. 2 coiled-coil regions span residues 1227–1259 (EELK…RYRT) and 1339–1409 (TVEL…AVRQ). AAA stretches follow at residues 1920 to 2141 (YGYE…VLVM), 2201 to 2437 (DVVE…RRPK), 2550 to 2800 (EPPA…IYEG), and 2906 to 3155 (NFYN…LRRY). Residues 1958 to 1965 (GPAGTGKT), 2242 to 2249 (GQTGGGKT), 2588 to 2595 (GESGTAKS), and 2945 to 2952 (GVGGSGKQ) each bind ATP. 2 coiled-coil regions span residues 3192 to 3297 (LEKL…IRSY) and 3400 to 3494 (KRKK…LIGD). Positions 3192–3494 (LEKLIQAAVE…ESRRDRLIGD (303 aa)) are stalk. AAA regions lie at residues 3542–3773 (LTSD…EIAE) and 3998–4216 (ITRF…LIST). 3680 to 3687 (GPEISGKT) lines the ATP pocket. Positions 3701–3788 (EQLLNVTLRH…KVTAAEIEET (88 aa)) form a coiled coil.

This sequence belongs to the dynein heavy chain family. In terms of assembly, the I1 inner arm complex (also known as the f dynein complex) is a two-headed isoform composed of two heavy chains (1-alpha and 1-beta), three intermediate chains and three light chains. I1 occupies a specific position proximal to the first radial spoke and repeats every 96 nm along the length of the axoneme.

It is found in the cell projection. The protein localises to the cilium. Its subcellular location is the flagellum. It localises to the cytoplasm. The protein resides in the cytoskeleton. It is found in the flagellum axoneme. In terms of biological role, force generating protein of eukaryotic cilia and flagella. Produces force towards the minus ends of microtubules. Dynein has ATPase activity; the force-producing power stroke is thought to occur on release of ADP. Required for assembly of the I1 inner arm complex and its targeting to the appropriate axoneme location. Also required for phototaxis. The chain is Dynein-1-alpha heavy chain, flagellar inner arm I1 complex (DHC1) from Chlamydomonas reinhardtii (Chlamydomonas smithii).